The primary structure comprises 81 residues: Metallocarboxypeptidase inhibitor (81 aa).

Residues 1–15 (MFLLVFLCCLHLVIS) form the signal peptide. Intrachain disulfides connect Cys25/Cys48, Cys32/Cys76, Cys33/Cys57, and Cys36/Cys72.

Its function is as follows. Tightly binding, competitive inhibitor of different types of pancreatic-like carboxypeptidases. Inhibits human CPA4. This chain is Metallocarboxypeptidase inhibitor, found in Hirudo medicinalis (Medicinal leech).